Reading from the N-terminus, the 552-residue chain is Macrophage colony-stimulating factor 1 (552 aa).

The N-terminal stretch at 1-32 (MTARGAAGRCPSSTWLGSRLLLVCLLMSRSIA) is a signal peptide. The Extracellular segment spans residues 33-492 (KEVSEHCSHM…EGSSDPQIPE (460 aa)). 3 disulfide bridges follow: C39-C122, C80-C171, and C134-C178. N-linked (GlcNAc...) asparagine glycans are attached at residues N107, N154, and N172. Low complexity predominate over residues 197-207 (TPSSDPASASP). Residues 197–293 (TPSSDPASAS…GGPVPGVEDI (97 aa)) form a disordered region. The segment covering 254–267 (PRSTCQTLESTEQP) has biased composition (polar residues). Residues 268–278 (NHGDRLTEDSQ) are compositionally biased toward basic and acidic residues. O-linked (Xyl...) (chondroitin sulfate) serine glycosylation is present at S308. Disordered regions lie at residues 321-412 (KFSP…RVSN) and 439-465 (GKRS…ARPV). Composition is skewed to basic and acidic residues over residues 350 to 364 (STED…DRPL), 382 to 396 (EKTD…DHQE), and 439 to 450 (GKRSTRDRRSPA). O-linked (GalNAc...) threonine glycosylation is present at T360. A helical membrane pass occupies residues 493–515 (SVFHLLVPGIILVLLTVGGLLFY). Residues 516–552 (KWKWRSHRDPQTLDSSVGRPEDSSLTQDEDRQVELPV) are Cytoplasmic-facing. Positions 525-552 (PQTLDSSVGRPEDSSLTQDEDRQVELPV) are disordered. Positions 543-552 (DEDRQVELPV) are enriched in basic and acidic residues.

As to quaternary structure, homodimer or heterodimer; disulfide-linked. Likely to exist in multiple forms: homodimer consisting of 2 identical 150-200 kDa proteoglycan subunits, heterodimer consisting of a 150-200 kDa proteoglycan subunit and a truncated 43 kDa subunit, and homodimer consisting of 2 identical 43 kDa subunits. Interacts with CSF1R. N-glycosylated. In terms of processing, O-glycosylated; contains chondroitin sulfate.

It localises to the cell membrane. Its subcellular location is the secreted. The protein resides in the extracellular space. Cytokine that plays an essential role in the regulation of survival, proliferation and differentiation of hematopoietic precursor cells, especially mononuclear phagocytes, such as macrophages and monocytes. Promotes the release of pro-inflammatory chemokines, and thereby plays an important role in innate immunity and in inflammatory processes. Plays an important role in the regulation of osteoclast proliferation and differentiation, the regulation of bone resorption, and is required for normal bone development. Required for normal male and female fertility. Promotes reorganization of the actin cytoskeleton, regulates formation of membrane ruffles, cell adhesion and cell migration. Plays a role in lipoprotein clearance. This chain is Macrophage colony-stimulating factor 1 (Csf1), found in Mus musculus (Mouse).